Here is a 205-residue protein sequence, read N- to C-terminus: MVKLIASLLLLAVVAQAYGDFKCSLAVPEITKDWVDMKDACIKGMRNQIQEEINASYQYLAMGAYFSRDTVNRPGFAEHFFKAAKEEREHGSKLVEYLSMRGQLTEGVSDLINVPTVAKQEWTDGAAALSDALDLEIKVTKSIRKLIQTCENKPYNHYHLVDYLTGVYLEEQLHGQRELAGKLTTLKKMMDTNGELGEFLFDKTL.

A signal peptide spans 1 to 19 (MVKLIASLLLLAVVAQAYG). The Ferritin-like diiron domain occupies 35 to 190 (VDMKDACIKG…GKLTTLKKMM (156 aa)). Residues Cys41 and Cys150 are joined by a disulfide bond. Residues Glu52, Glu87, His90, Glu136, and Gln172 each coordinate Fe cation.

The protein belongs to the ferritin family. Oligomer of 12 light (L) chains and 12 heavy (H) chains; L and H chains are disulfide-linked. The functional molecule forms a roughly spherical shell with a diameter of 12 nm and contains a central cavity into which the insoluble ferric iron core is deposited. In terms of tissue distribution, expressed in hemolymph and gut (at protein level). Expressed in the head (at protein level). Expressed in thorax and abdomen.

The protein localises to the golgi apparatus. It is found in the secreted. It catalyses the reaction 4 Fe(2+) + O2 + 4 H(+) = 4 Fe(3+) + 2 H2O. Stores iron in a soluble, non-toxic, readily available form. Important for iron homeostasis. Iron is taken up in the ferrous form and deposited as ferric hydroxides after oxidation. Ferritin is composed of a heavy (H) chain which is responsible for the oxidation and uptake of ferrous iron, and a light (L) chain which facilitates the nucleation of the ferrihydrite iron core. Required for dietary iron absorption in the midgut. Involved in tissue iron detoxification by exporting excess iron. Functions as an antioxidant and protects the developing organs from cell-mediated ferroptosis. Required for embryo and larval development. Plays a role in blood cell (haemocyte) differentiation in the lymph gland at the larval stage. May also store Zn(2+) and Mn(2+) and thus may play a role in zinc and manganese homeostasis. This Drosophila melanogaster (Fruit fly) protein is Ferritin heavy chain.